The following is a 377-amino-acid chain: tRNA-specific 2-thiouridylase MnmA (377 aa).

ATP contacts are provided by residues 16 to 23 (GMSGGVDS) and M42. Positions 102–104 (NPD) are interaction with target base in tRNA. C107 acts as the Nucleophile in catalysis. Cysteines 107 and 204 form a disulfide. G131 is a binding site for ATP. The tract at residues 154–156 (KDQ) is interaction with tRNA. The active-site Cysteine persulfide intermediate is C204. The interval 315–316 (RY) is interaction with tRNA.

The protein belongs to the MnmA/TRMU family.

The protein resides in the cytoplasm. It catalyses the reaction S-sulfanyl-L-cysteinyl-[protein] + uridine(34) in tRNA + AH2 + ATP = 2-thiouridine(34) in tRNA + L-cysteinyl-[protein] + A + AMP + diphosphate + H(+). Functionally, catalyzes the 2-thiolation of uridine at the wobble position (U34) of tRNA, leading to the formation of s(2)U34. The chain is tRNA-specific 2-thiouridylase MnmA from Lacticaseibacillus paracasei (strain ATCC 334 / BCRC 17002 / CCUG 31169 / CIP 107868 / KCTC 3260 / NRRL B-441) (Lactobacillus paracasei).